The following is a 244-amino-acid chain: uncharacterized protein (244 aa).

Residues 1–11 (MSRRSRSRSRS) show a composition bias toward basic residues. 2 disordered regions span residues 1–104 (MSRR…TLNE) and 213–244 (ARQK…KFGK). Residues 12–31 (PKRDREERKRREDRDRDRER) show a composition bias toward basic and acidic residues. Residues 32–46 (KRDRKDRERKRRHRS) are compositionally biased toward basic residues. Basic and acidic residues predominate over residues 63–75 (FREERRRRERNES). The segment covering 77-89 (KLPPPPPPPPSDP) has biased composition (pro residues). Over residues 213 to 223 (ARQKSDMKKNE) the composition is skewed to basic and acidic residues. Positions 224–234 (QQAILNKSGNS) are enriched in polar residues.

This is an uncharacterized protein from Caenorhabditis elegans.